The chain runs to 210 residues: Probable GTP-binding protein EngB (210 aa).

The region spanning 25–199 (RGIEVAFAGR…RQKLDSWFSE (175 aa)) is the EngB-type G domain. GTP is bound by residues 33–40 (GRSNAGKS), 60–64 (GRTQL), 78–81 (DLPG), 145–148 (TKAD), and 178–180 (FSS). 2 residues coordinate Mg(2+): S40 and T62.

The protein belongs to the TRAFAC class TrmE-Era-EngA-EngB-Septin-like GTPase superfamily. EngB GTPase family. Mg(2+) serves as cofactor.

In terms of biological role, necessary for normal cell division and for the maintenance of normal septation. In Salmonella paratyphi B (strain ATCC BAA-1250 / SPB7), this protein is Probable GTP-binding protein EngB.